The sequence spans 420 residues: UDP-N-acetyl-D-mannosamine dehydrogenase (420 aa).

Residues Y13, I14, D33, T85, and T126 each coordinate NAD(+). Residues R160, V161, K212, N216, R219, H250, R252, and G263 each coordinate UDP-N-acetyl-alpha-D-mannosaminouronate. The active-site Proton donor/acceptor is K212. Catalysis depends on C266, which acts as the Nucleophile. 2 residues coordinate UDP-N-acetyl-alpha-D-mannosaminouronate: F330 and K331. NAD(+) is bound at residue R338. Residue K416 participates in UDP-N-acetyl-alpha-D-mannosaminouronate binding.

This sequence belongs to the UDP-glucose/GDP-mannose dehydrogenase family. WecC subfamily. As to quaternary structure, homodimer.

The enzyme catalyses UDP-N-acetyl-alpha-D-mannosamine + 2 NAD(+) + H2O = UDP-N-acetyl-alpha-D-mannosaminouronate + 2 NADH + 3 H(+). Its pathway is bacterial outer membrane biogenesis; enterobacterial common antigen biosynthesis. Its function is as follows. Catalyzes the four-electron oxidation of UDP-N-acetyl-D-mannosamine (UDP-ManNAc), reducing NAD(+) and releasing UDP-N-acetylmannosaminuronic acid (UDP-ManNAcA). The protein is UDP-N-acetyl-D-mannosamine dehydrogenase of Shigella flexneri.